The following is a 358-amino-acid chain: Aminomethyltransferase (358 aa).

The protein belongs to the GcvT family. As to quaternary structure, the glycine cleavage system is composed of four proteins: P, T, L and H.

The catalysed reaction is N(6)-[(R)-S(8)-aminomethyldihydrolipoyl]-L-lysyl-[protein] + (6S)-5,6,7,8-tetrahydrofolate = N(6)-[(R)-dihydrolipoyl]-L-lysyl-[protein] + (6R)-5,10-methylene-5,6,7,8-tetrahydrofolate + NH4(+). The glycine cleavage system catalyzes the degradation of glycine. This chain is Aminomethyltransferase, found in Francisella philomiragia subsp. philomiragia (strain ATCC 25017 / CCUG 19701 / FSC 153 / O#319-036).